The following is a 311-amino-acid chain: Putative ankyrin repeat protein RF_0923 (311 aa).

ANK repeat units follow at residues 42 to 71 (IDNTALIWAVDKGLEKVCEMLIPKMSEQAI), 77 to 106 (NGNTALTLAASKGLEKICELLIPKMSPQAI), 112 to 141 (NGNTALTWAAWKDLEKICEMLIPKMSPQAI), 147 to 176 (NGNTALILAAWKGLEKICKILIPKMFEQAI), and 182 to 213 (KGCTALTLAADKDLKKIYELLINKMSIDAINH).

In Rickettsia felis (strain ATCC VR-1525 / URRWXCal2) (Rickettsia azadi), this protein is Putative ankyrin repeat protein RF_0923.